A 109-amino-acid chain; its full sequence is Large ribosomal subunit protein P2 (109 aa).

The disordered stretch occupies residues Ala63–Asp109. The segment covering Gly68–Ala79 has biased composition (gly residues). Over residues Glu91 to Met103 the composition is skewed to acidic residues. Ser99 bears the Phosphoserine mark.

This sequence belongs to the eukaryotic ribosomal protein P1/P2 family. P1 and P2 exist as dimers at the large ribosomal subunit.

Its function is as follows. Plays an important role in the elongation step of protein synthesis. This chain is Large ribosomal subunit protein P2, found in Fusarium culmorum.